The sequence spans 281 residues: 2-dehydro-3-deoxyphosphooctonate aldolase (281 aa).

The protein belongs to the KdsA family.

The protein localises to the cytoplasm. The enzyme catalyses D-arabinose 5-phosphate + phosphoenolpyruvate + H2O = 3-deoxy-alpha-D-manno-2-octulosonate-8-phosphate + phosphate. It functions in the pathway carbohydrate biosynthesis; 3-deoxy-D-manno-octulosonate biosynthesis; 3-deoxy-D-manno-octulosonate from D-ribulose 5-phosphate: step 2/3. The protein operates within bacterial outer membrane biogenesis; lipopolysaccharide biosynthesis. This chain is 2-dehydro-3-deoxyphosphooctonate aldolase, found in Pseudomonas fluorescens (strain ATCC BAA-477 / NRRL B-23932 / Pf-5).